We begin with the raw amino-acid sequence, 395 residues long: Phosphoribulokinase, chloroplastic (395 aa).

Residues 1–46 constitute a chloroplast transit peptide; that stretch reads MAVSTIYSTQALNSTHFLTSSSSSKQVFLYRRQPQTNRRFNTLITC. A disulfide bridge links cysteine 61 with cysteine 100.

It belongs to the phosphoribulokinase family.

It localises to the plastid. It is found in the chloroplast. The enzyme catalyses D-ribulose 5-phosphate + ATP = D-ribulose 1,5-bisphosphate + ADP + H(+). Its pathway is carbohydrate biosynthesis; Calvin cycle. Light regulated via thioredoxin by reversible oxidation/reduction of sulfhydryl/disulfide groups. In Arabidopsis thaliana (Mouse-ear cress), this protein is Phosphoribulokinase, chloroplastic.